Consider the following 482-residue polypeptide: Carbamoyl phosphate synthase large chain, N-terminal section (482 aa).

The interval 1 to 398 (MESIKKVMVF…ALQKAIRSLD (398 aa)) is carboxyphosphate synthetic domain. The ATP site is built by arginine 126, arginine 166, glycine 172, glycine 173, glutamate 205, valine 207, glutamate 212, glycine 238, isoleucine 239, histidine 240, glutamine 281, and glutamate 295. The 195-residue stretch at 130–324 (AEAMAEINEP…IARIAAKIAI (195 aa)) folds into the ATP-grasp domain. Positions 281, 295, and 297 each coordinate Mg(2+). Residues glutamine 281, glutamate 295, and asparagine 297 each contribute to the Mn(2+) site.

This sequence belongs to the CarB family. In terms of assembly, composed of two chains; the small (or glutamine) chain promotes the hydrolysis of glutamine to ammonia, which is used by the large (or ammonia) chain to synthesize carbamoyl phosphate. Tetramer of heterodimers (alpha,beta)4. The cofactor is Mg(2+). Mn(2+) is required as a cofactor.

The catalysed reaction is hydrogencarbonate + L-glutamine + 2 ATP + H2O = carbamoyl phosphate + L-glutamate + 2 ADP + phosphate + 2 H(+). It carries out the reaction hydrogencarbonate + NH4(+) + 2 ATP = carbamoyl phosphate + 2 ADP + phosphate + 2 H(+). It functions in the pathway amino-acid biosynthesis; L-arginine biosynthesis; carbamoyl phosphate from bicarbonate: step 1/1. The protein operates within pyrimidine metabolism; UMP biosynthesis via de novo pathway; (S)-dihydroorotate from bicarbonate: step 1/3. Functionally, large subunit of the glutamine-dependent carbamoyl phosphate synthetase (CPSase). CPSase catalyzes the formation of carbamoyl phosphate from the ammonia moiety of glutamine, carbonate, and phosphate donated by ATP, constituting the first step of 2 biosynthetic pathways, one leading to arginine and/or urea and the other to pyrimidine nucleotides. The large subunit (synthetase) binds the substrates ammonia (free or transferred from glutamine from the small subunit), hydrogencarbonate and ATP and carries out an ATP-coupled ligase reaction, activating hydrogencarbonate by forming carboxy phosphate which reacts with ammonia to form carbamoyl phosphate. The sequence is that of Carbamoyl phosphate synthase large chain, N-terminal section (carB1) from Methanocaldococcus jannaschii (strain ATCC 43067 / DSM 2661 / JAL-1 / JCM 10045 / NBRC 100440) (Methanococcus jannaschii).